A 154-amino-acid polypeptide reads, in one-letter code: Large-conductance mechanosensitive channel (154 aa).

Helical transmembrane passes span 16 to 36, 39 to 59, and 89 to 109; these read VLGL…ISSV, DLLM…GFFI, and GQFL…FMIM.

This sequence belongs to the MscL family. Homopentamer.

It localises to the cell inner membrane. Functionally, channel that opens in response to stretch forces in the membrane lipid bilayer. May participate in the regulation of osmotic pressure changes within the cell. The polypeptide is Large-conductance mechanosensitive channel (Zymomonas mobilis subsp. mobilis (strain ATCC 31821 / ZM4 / CP4)).